Consider the following 809-residue polypeptide: Sodium/hydrogen exchanger 2 (809 aa).

A run of 7 helical transmembrane segments spans residues 107–127 (IVPE…IIFG), 138–158 (TDVF…YFMP), 169–189 (IFWY…VSLF), 209–229 (LFGS…FENI), 237–257 (ILVF…YNLF), 278–298 (FFVV…IAAF), and 308–328 (VIEP…AEMF). N-linked (GlcNAc...) asparagine glycosylation is present at N350. Transmembrane regions (helical) follow at residues 361–381 (YFMK…MGVS), 392–412 (AFVC…VFVL), 430–450 (FIIA…FLLP), and 459–479 (LFIT…GITI). Composition is skewed to basic and acidic residues over residues 648-660 (IRKD…ERRA) and 793-809 (RASE…SDKP). Disordered regions lie at residues 648–700 (IRKD…EADA) and 734–809 (EVDA…SDKP).

Belongs to the monovalent cation:proton antiporter 1 (CPA1) transporter (TC 2.A.36) family. In terms of assembly, interacts with CHP1 and CHP2. High levels in intestine and kidney. Strongly expressed in gastric epithelial cells, with particularly high expression levels in mucous cells.

It localises to the apical cell membrane. The catalysed reaction is Na(+)(in) + H(+)(out) = Na(+)(out) + H(+)(in). Plasma membrane Na(+)/H(+) antiporter. Mediates the electroneutral exchange of intracellular H(+) ions for extracellular Na(+). Major apical Na(+)/H(+) exchanger in the base of the colonic crypt. Controls in the colonic crypt intracellular pH (pHi) to direct colonic epithelial cell differentiation into the absorptive enterocyte lineage at the expense of the secretory lineage. The chain is Sodium/hydrogen exchanger 2 (SLC9A2) from Oryctolagus cuniculus (Rabbit).